A 1451-amino-acid polypeptide reads, in one-letter code: MVSKRRLSKSEDKESLTEDASKTRKQPLSKKTKKSHIANEVEENDSIFVKLLKISGIILKTGESQNQLAVDQIAFQKKLFQTLRRHPSYPKIIEEFVSGLESYIEDEDSFRNCLLSCERLQDEEASMGASYSKSLIKLLLGIDILQPAIIKTLFEKLPEYFFENKNSDEINIPRLIVSQLKWLDRVVDGKDLTTKIMQLISIAPENLQHDIITSLPEILGDSQHADVGKELSDLLIENTSLTVPILDVLSSLRLDPNFLLKVRQLVMDKLSSIRLEDLPVIIKFILHSVTAMDTLEVISELREKLDLQHCVLPSRLQASQVKLKSKGRASSSGNQESSGQSCIILLFDVIKSAIRYEKTISEAWIKAIENTASVSEHKVFDLVMLFIIYSTNTQTKKYIDRVLRNKIRSGCIQEQLLQSTFSVHYLVLKDMCSSILSLAQSLLHSLDQSIISFGSLLYKYAFKFFDTYCQQEVVGALVTHICSGNEAEVDTALDVLLELVVLNPSAMMMNAVFVKGILDYLDNISPQQIRKLFYVLSTLAFSKQNEASSHIQDDMHLVIRKQLSSTVFKYKLIGIIGAVTMAGIMAADRSESPSLTQERANLSDEQCTQVTSLLQLVHSCSEQSPQASALYYDEFANLIQHEKLDPKALEWVGHTICNDFQDAFVVDSCVVPEGDFPFPVKALYGLEEYDTQDGIAINLLPLLFSQDFAKDGGPVTSQESGQKLVSPLCLAPYFRLLRLCVERQHNGNLEEIDGLLDCPIFLTDLEPGEKLESMSAKERSFMCSLIFLTLNWFREIVNAFCQETSPEMKGKVLTRLKHIVELQIILEKYLAVTPDYVPPLGNFDVETLDITPHTVTAISAKIRKKGKIERKQKTDGSKTSSSDTLSEEKNSECDPTPSHRGQLNKEFTGKEEKTSLLLHNSHAFFRELDIEVFSILHCGLVTKFILDTEMHTEATEVVQLGPPELLFLLEDLSQKLESMLTPPIARRVPFLKNKGSRNIGFSHLQQRSAQEIVHCVFQLLTPMCNHLENIHNYFQCLAAENHGVVDGPGVKVQEYHIMSSCYQRLLQIFHGLFAWSGFSQPENQNLLYSALHVLSSRLKQGEHSQPLEELLSQSVHYLQNFHQSIPSFQCALYLIRLLMVILEKSTASAQNKEKIASLARQFLCRVWPSGDKEKSNISNDQLHALLCIYLEHTESILKAIEEIAGVGVPELINSPKDASSSTFPTLTRHTFVVFFRVMMAELEKTVKKIEPGTAADSQQIHEEKLLYWNMAVRDFSILINLIKVFDSHPVLHVCLKYGRLFVEAFLKQCMPLLDFSFRKHREDVLSLLETFQLDTRLLHHLCGHSKIHQDTRLTQHVPLLKKTLELLVCRVKAMLTLNNCREAFWLGNLKNRDLQGEEIKSQNSQESTADESEDDMSSQASKSKATEDGEEDEVSAGEKEQDSDESYDDSD.

Residues 1–37 (MVSKRRLSKSEDKESLTEDASKTRKQPLSKKTKKSHI) form a disordered region. The interval 1–291 (MVSKRRLSKS…IKFILHSVTA (291 aa)) is interaction with FANCE. Ser-8 bears the Phosphoserine mark. The segment covering 8 to 22 (SKSEDKESLTEDASK) has biased composition (basic and acidic residues). Positions 23-36 (TRKQPLSKKTKKSH) are enriched in basic residues. Ser-222 is modified (phosphoserine; by ATM). The interaction with BRCA2 stretch occupies residues 248 to 359 (VLSSLRLDPN…IKSAIRYEKT (112 aa)). Lys-561 is covalently cross-linked (Glycyl lysine isopeptide (Lys-Gly) (interchain with G-Cter in ubiquitin)). Residues Ser-592, Ser-594, and Ser-717 each carry the phosphoserine modification. The disordered stretch occupies residues 868-906 (IERKQKTDGSKTSSSDTLSEEKNSECDPTPSHRGQLNKE). The residue at position 1257 (Ser-1257) is a Phosphoserine. The disordered stretch occupies residues 1396-1451 (GEEIKSQNSQESTADESEDDMSSQASKSKATEDGEEDEVSAGEKEQDSDESYDDSD). Ser-1401 and Ser-1404 each carry phosphoserine; by ATM. Phosphoserine occurs at positions 1412 and 1423. The residue at position 1426 (Thr-1426) is a Phosphothreonine. Positions 1428–1451 (DGEEDEVSAGEKEQDSDESYDDSD) are enriched in acidic residues. Phosphoserine is present on Ser-1435.

This sequence belongs to the Fanconi anemia protein FANCD2 family. Homodimer; cannot be ubiquitinated and does not bind DNA. Part of a FANCI-FANCD2 heterodimeric complex that binds and scans dsDNA for DNA damage. Interacts directly with FANCE and FANCI. Interacts with USP1 and MEN1. The ubiquitinated form specifically interacts with BRCA1 and BLM. Both the nonubiquitinated and the monoubiquitinated forms interact with BRCA2; this interaction is mediated by phosphorylated FANCG and the complex also includes XCCR3. The ubiquitinated form specifically interacts with MTMR15/FAN1 (via UBZ-type zinc finger), leading to recruit MTMR15/FAN1 to sites of DNA damage. Interacts with DCLRE1B/Apollo. Interacts with POLN. Interacts with UHRF1 and UHRF2; these interactions promote FANCD2 activation. In terms of processing, monoubiquitinated on Lys-561 during S phase and upon genotoxic stress by FANCL in complex with E2 ligases UBE2T or UBE2W (isoform 1 and isoform 2). Deubiquitinated by USP1 as cells enter G2/M, or once DNA repair is completed. Monoubiquitination requires the joint intervention of the FANC core complex, including FANCA, FANCB, FANCC, FANCE, FANCF, FANCG, and FANCM, and proteins involved in cell cycle checkpoints and DNA repair, including RPA1, ATR, CHEK1 and BRCA1, and is mediated by FANCL/PHF9. Monoubiquitination prevents DNA release from the FANCI-FANCD2 complex. FANCD2 is only ubiquitinated in the FANCI-FANCD2 complex and the monoubiquitination of FANCD2 is promoted by phosphorylation of FANCI. Ubiquitination is required for binding to chromatin, interaction with BRCA1, BRCA2 and MTMR15/FAN1, DNA repair, and normal cell cycle progression, but not for phosphorylation on Ser-222 or interaction with MEN1. Phosphorylated in response to various genotoxic stresses by ATM and/or ATR. Upon ionizing radiation, phosphorylated by ATM on Ser-222 and Ser-1404. Phosphorylation on Ser-222 is required for S-phase checkpoint activation, but not for ubiquitination, foci formation, or DNA repair. In contrast, phosphorylation by ATR on other sites may be required for ubiquitination and foci formation. Highly expressed in germinal center cells of the spleen, tonsil, and reactive lymph nodes, and in the proliferating basal layer of squamous epithelium of tonsil, esophagus, oropharynx, larynx and cervix. Expressed in cytotrophoblastic cells of the placenta and exocrine cells of the pancreas (at protein level). Highly expressed in testis, where expression is restricted to maturing spermatocytes.

The protein resides in the nucleus. Required for maintenance of chromosomal stability. Promotes accurate and efficient pairing of homologs during meiosis. Involved in the repair of DNA double-strand breaks, both by homologous recombination and single-strand annealing. The FANCI-FANCD2 complex binds and scans double-stranded DNA (dsDNA) for DNA damage; this complex stalls at DNA junctions between double-stranded DNA and single-stranded DNA. May participate in S phase and G2 phase checkpoint activation upon DNA damage. Plays a role in preventing breakage and loss of missegregating chromatin at the end of cell division, particularly after replication stress. Required for the targeting, or stabilization, of BLM to non-centromeric abnormal structures induced by replicative stress. Promotes BRCA2/FANCD1 loading onto damaged chromatin. May also be involved in B-cell immunoglobulin isotype switching. This Homo sapiens (Human) protein is Fanconi anemia group D2 protein (FANCD2).